A 389-amino-acid polypeptide reads, in one-letter code: P2X purinoceptor 6 (389 aa).

Residues 1-45 are Cytoplasmic-facing; it reads MQLQPAGTGNMASAAAAALVSWGFLDYKTEKYVLTRNCRVGVSQR. A helical membrane pass occupies residues 46–66; it reads LLQLAVVVYVIGWALLAKKGY. Residues 67 to 335 are Extracellular-facing; sequence QERDLAPQTS…LVTGQAGKFA (269 aa). 3 cysteine pairs are disulfide-bonded: Cys129–Cys179, Cys140–Cys163, and Cys146–Cys173. Residues Asn167, Asn197, and Asn212 are each glycosylated (N-linked (GlcNAc...) asparagine). 2 cysteine pairs are disulfide-bonded: Cys230/Cys240 and Cys274/Cys283. The helical transmembrane segment at 336 to 356 threads the bilayer; that stretch reads LIPTAITVGTGAAWLGMVTFL. The Cytoplasmic segment spans residues 357-389; sequence CDLLLLYVDREAGFYWRTKYEEARAPKTTTNSS.

The protein belongs to the P2X receptor family. As to quaternary structure, unlike most P2RXs, P2RX6 does not seem to form homotrimers. P2RX6 are likely to form as obligate heteromers with other P2RXs subunits. Forms heterotrimer with P2RX2 with a variable subunit stoichiometry determined by subunit expression levels. Forms heterotrimer with P2RX4; functional differences between homomeric P2RX4 and P2RX4/6 heterotrimer are minor. Forms a P2RX2/P2RX4/P2RX6 heterotrimer. Interacts with SF3A1; resulting in a reduction of the splicing activity. In terms of processing, N-glycosylated. N-linked glycosylation can affect trafficking to the membrane and function. As to expression, predominantly expressed in skeletal muscle. Also expressed in lung.

The protein localises to the cell membrane. It is found in the endoplasmic reticulum. Its subcellular location is the nucleus. The protein resides in the nucleus inner membrane. The enzyme catalyses Ca(2+)(in) = Ca(2+)(out). Its function is as follows. Acts as a modulatory subunit rather than a functional channel. Unlike other P2XRs members, P2RX6 does not seem to form functional homotrimers. P2RX6 requires the presence of P2RX4 or P2RX2 to form functional heterotrimeric receptors at the plasma membrane. P2RX6 can be translocated to the nucleus, where it interacts with the splicing factor (SF3A1), to reduce the incidence of mRNA splicing. May function as a nuclear regulator of post-transcriptional modifications in neurons. In Mus musculus (Mouse), this protein is P2X purinoceptor 6 (P2rx6).